The chain runs to 110 residues: Large ribosomal subunit protein uL22 (110 aa).

It belongs to the universal ribosomal protein uL22 family. Part of the 50S ribosomal subunit.

Its function is as follows. This protein binds specifically to 23S rRNA; its binding is stimulated by other ribosomal proteins, e.g. L4, L17, and L20. It is important during the early stages of 50S assembly. It makes multiple contacts with different domains of the 23S rRNA in the assembled 50S subunit and ribosome. Functionally, the globular domain of the protein is located near the polypeptide exit tunnel on the outside of the subunit, while an extended beta-hairpin is found that lines the wall of the exit tunnel in the center of the 70S ribosome. In Colwellia psychrerythraea (strain 34H / ATCC BAA-681) (Vibrio psychroerythus), this protein is Large ribosomal subunit protein uL22.